The following is a 62-amino-acid chain: Large ribosomal subunit protein bL28 (62 aa).

This sequence belongs to the bacterial ribosomal protein bL28 family.

The chain is Large ribosomal subunit protein bL28 from Acidothermus cellulolyticus (strain ATCC 43068 / DSM 8971 / 11B).